A 187-amino-acid chain; its full sequence is Ribosome-recycling factor (187 aa).

This sequence belongs to the RRF family.

The protein resides in the cytoplasm. In terms of biological role, responsible for the release of ribosomes from messenger RNA at the termination of protein biosynthesis. May increase the efficiency of translation by recycling ribosomes from one round of translation to another. The sequence is that of Ribosome-recycling factor from Lactiplantibacillus plantarum (strain ATCC BAA-793 / NCIMB 8826 / WCFS1) (Lactobacillus plantarum).